The chain runs to 357 residues: Uroporphyrinogen decarboxylase (357 aa).

Substrate is bound by residues 34–38, aspartate 83, tyrosine 158, serine 213, and histidine 336; that span reads RQAGR.

Belongs to the uroporphyrinogen decarboxylase family. Homodimer.

It localises to the cytoplasm. The enzyme catalyses uroporphyrinogen III + 4 H(+) = coproporphyrinogen III + 4 CO2. Its pathway is porphyrin-containing compound metabolism; protoporphyrin-IX biosynthesis; coproporphyrinogen-III from 5-aminolevulinate: step 4/4. Its function is as follows. Catalyzes the decarboxylation of four acetate groups of uroporphyrinogen-III to yield coproporphyrinogen-III. The sequence is that of Uroporphyrinogen decarboxylase from Mycolicibacterium paratuberculosis (strain ATCC BAA-968 / K-10) (Mycobacterium paratuberculosis).